The sequence spans 184 residues: MSGARAAPGAAGNGAVRGLRVDGLPPLPKSLSGLLHSASGGGASGGWRHLERLYAQKSRIQDELSRGGPGGGGARAAALPAKPPNLDAALALLRKEMVGLRQLDMSLLCQLYSLYESIQEYKGACQAASSPDCTYALENGFFDEEEEYFQEQNSLHDRRDRGPPRDLSLPVSSLSSSDWILESI.

The segment at 148–184 (YFQEQNSLHDRRDRGPPRDLSLPVSSLSSSDWILESI) is disordered. Over residues 154–164 (SLHDRRDRGPP) the composition is skewed to basic and acidic residues. Over residues 167–184 (LSLPVSSLSSSDWILESI) the composition is skewed to low complexity.

It belongs to the FAM89 family.

This Homo sapiens (Human) protein is Protein FAM89A (FAM89A).